Reading from the N-terminus, the 1304-residue chain is Splicing factor 3B subunit 1 (1304 aa).

2 disordered regions span residues 100–119 and 124–148; these read QYDP…EDEY and RTMI…PKMN. The span at 104–119 shows a compositional bias: basic and acidic residues; that stretch reads FAEHRPPKIADREDEY. A Phosphothreonine modification is found at Thr125. Phosphoserine is present on Ser129. Lys141 carries the post-translational modification N6-acetyllysine. Position 142 is a phosphothreonine (Thr142). Arg157 is subject to Citrulline. The segment at 173–360 is disordered; the sequence is AEKAKAGELK…PVLTPGKTPI (188 aa). The segment at 190 to 342 is U2AF homology region; mediates interaction with RBM39; sequence SQPPSKRKRR…KRKSRWDETP (153 aa). Ser194 carries the post-translational modification Phosphoserine. Phosphothreonine occurs at positions 203, 207, and 211. The residue at position 214 (Lys214) is an N6-acetyllysine; alternate. A Glycyl lysine isopeptide (Lys-Gly) (interchain with G-Cter in SUMO2); alternate cross-link involves residue Lys214. Residues Thr223 and Thr227 each carry the phosphothreonine modification. The interval 223–491 is interaction with PPP1R8; it reads TPGHTPSLRW…VDESTLSPEE (269 aa). Ser229 is subject to Phosphoserine. The span at 231 to 241 shows a compositional bias: basic and acidic residues; the sequence is RWDETPGRAKG. Phosphothreonine occurs at positions 235, 244, 248, 257, 261, 267, 273, and 278. Ser287 bears the Phosphoserine mark. The span at 291–304 shows a compositional bias: basic and acidic residues; it reads NRWDETPKTERDTP. 4 positions are modified to phosphothreonine: Thr296, Thr299, Thr303, and Thr313. At Ser322 the chain carries Phosphoserine. Phosphothreonine occurs at positions 326 and 328. Ser332 bears the Phosphoserine mark. Thr341 is subject to Phosphothreonine. The segment covering 342–352 has biased composition (polar residues); that stretch reads PASQMGGSTPV. Phosphoserine occurs at positions 344 and 349. Thr350 and Thr354 each carry phosphothreonine. Ser400 is modified (phosphoserine). Residue Lys413 forms a Glycyl lysine isopeptide (Lys-Gly) (interchain with G-Cter in SUMO2); alternate linkage. Lys413 participates in a covalent cross-link: Glycyl lysine isopeptide (Lys-Gly) (interchain with G-Cter in SUMO1); alternate. Thr426 carries the post-translational modification Phosphothreonine. Lys430 participates in a covalent cross-link: Glycyl lysine isopeptide (Lys-Gly) (interchain with G-Cter in SUMO2). Thr434 is subject to Phosphothreonine; by DYRK1A. Thr436 carries the phosphothreonine modification. Ser488 carries the post-translational modification Phosphoserine. HEAT repeat units follow at residues 529–568, 569–603, 604–641, 643–677, 680–718, 763–801, 843–881, 1010–1048, 1052–1090, 1122–1160, and 1163–1201; these read GPLF…DLVR, PYVH…LAKA, AGLA…ALGI, SLLP…LMGC, LPHL…AATP, NYYT…TDGV, KVGA…NLGA, TPPI…RGAE, AREW…AIGP, TCSP…YIGE, and KDYI…GVYG. The interaction with SF3B14 stretch occupies residues 529 to 568; the sequence is GPLFNQILPLLMSPTLEDQERHLLVKVIDRILYKLDDLVR. Positions 547 to 550 are interaction with PHF5A; the sequence is QERH. Lys554 and Lys562 each carry N6-acetyllysine. Residues 1156-1157 are interaction with PHF5A; it reads EY. An interaction with SF3B3 and SF3B5 region spans residues 1248-1304; the sequence is QYCLQGLFHPARKVRDVYWKIYNSIYIGSQDALIAHYPRIYNDDKNTYIRYELDYIL.

The protein belongs to the SF3B1 family. In terms of assembly, component of the 17S U2 SnRNP complex, a ribonucleoprotein complex that contains small nuclear RNA (snRNA) U2 and a number of specific proteins. Part of the SF3B subcomplex of the 17S U2 SnRNP complex. SF3B associates with the splicing subcomplex SF3A and a 12S RNA unit to form the U2 small nuclear ribonucleoproteins complex (U2 snRNP). Within the SF3B complex, interacts directly (via HEAT domain) with SF3B3, SF3B5, SF3B6 and (via HEAT domain) with PHF5A. The SF3B subcomplex interacts with U2AF2. Identified in the spliceosome C complex. Component of the minor (U12-type spliceosome) spliceosome. Within the minor spliceosome complex, interacts with SCNM1 and CRIPT. Component of the B-WICH complex, at least composed of SMARCA5/SNF2H, BAZ1B/WSTF, SF3B1, DEK, MYO1C, ERCC6, MYBBP1A and DDX21. Phosphorylated form interacts with PPP1R8. Interacts with PQBP1. Interacts with RBM17. Interacts with RBM39. Interacts with SETX. Interacts with RBM15. Interacts with USH1G. Interacts with SDE2. Interacts with U2AF1. Interacts with CACTIN. Interacts with ZRSR1. Interacts with CYREN. Phosphorylated. Phosphorylation occurs concomitantly with the splicing catalytic steps. Phosphorylation on Thr-244, Thr-248 and Thr-313 by cyclin-dependent kinases promotes interaction with PPP1R8 during mitosis. In terms of processing, citrullinated by PADI4.

It is found in the nucleus. Its subcellular location is the nucleus speckle. Functionally, component of the 17S U2 SnRNP complex of the spliceosome, a large ribonucleoprotein complex that removes introns from transcribed pre-mRNAs. The 17S U2 SnRNP complex (1) directly participates in early spliceosome assembly and (2) mediates recognition of the intron branch site during pre-mRNA splicing by promoting the selection of the pre-mRNA branch-site adenosine, the nucleophile for the first step of splicing. Within the 17S U2 SnRNP complex, SF3B1 is part of the SF3B subcomplex, which is required for 'A' complex assembly formed by the stable binding of U2 snRNP to the branchpoint sequence in pre-mRNA. Sequence independent binding of SF3A and SF3B subcomplexes upstream of the branch site is essential, it may anchor U2 snRNP to the pre-mRNA. May also be involved in the assembly of the 'E' complex. Also acts as a component of the minor spliceosome, which is involved in the splicing of U12-type introns in pre-mRNAs. Together with other U2 snRNP complex components may also play a role in the selective processing of microRNAs (miRNAs) from the long primary miRNA transcript, pri-miR-17-92. This chain is Splicing factor 3B subunit 1, found in Homo sapiens (Human).